The chain runs to 405 residues: Argininosuccinate synthase (405 aa).

ATP-binding positions include alanine 10 to serine 18 and alanine 37. L-citrulline is bound by residues tyrosine 88 and serine 93. ATP is bound at residue glycine 118. Positions 120, 124, and 125 each coordinate L-aspartate. Asparagine 124 is a binding site for L-citrulline. The L-citrulline site is built by arginine 128, serine 179, serine 188, glutamate 264, and tyrosine 276.

It belongs to the argininosuccinate synthase family. Type 1 subfamily. Homotetramer.

Its subcellular location is the cytoplasm. It catalyses the reaction L-citrulline + L-aspartate + ATP = 2-(N(omega)-L-arginino)succinate + AMP + diphosphate + H(+). It participates in amino-acid biosynthesis; L-arginine biosynthesis; L-arginine from L-ornithine and carbamoyl phosphate: step 2/3. The protein is Argininosuccinate synthase of Pseudomonas syringae pv. syringae (strain B728a).